The sequence spans 277 residues: Diaminopimelate epimerase (277 aa).

The substrate site is built by Asn11 and Asn62. Cys71 functions as the Proton donor in the catalytic mechanism. Substrate-binding positions include 72 to 73, Asn160, Asn193, and 211 to 212; these read GN and ER. Catalysis depends on Cys220, which acts as the Proton acceptor. 221 to 222 is a substrate binding site; the sequence is GT.

The protein belongs to the diaminopimelate epimerase family. As to quaternary structure, homodimer.

Its subcellular location is the cytoplasm. The catalysed reaction is (2S,6S)-2,6-diaminopimelate = meso-2,6-diaminopimelate. It functions in the pathway amino-acid biosynthesis; L-lysine biosynthesis via DAP pathway; DL-2,6-diaminopimelate from LL-2,6-diaminopimelate: step 1/1. Its function is as follows. Catalyzes the stereoinversion of LL-2,6-diaminopimelate (L,L-DAP) to meso-diaminopimelate (meso-DAP), a precursor of L-lysine. The polypeptide is Diaminopimelate epimerase (Methanococcus maripaludis (strain C5 / ATCC BAA-1333)).